The following is a 345-amino-acid chain: D-fructose 1,6-bisphosphatase class 2/sedoheptulose 1,7-bisphosphatase (345 aa).

4 residues coordinate Mn(2+): Asp-33, Glu-57, Asp-97, and Glu-100. Substrate is bound by residues 100–102 (EGT), Tyr-131, 176–178 (RPR), and 198–200 (DGD). Glu-225 contributes to the Mn(2+) binding site.

This sequence belongs to the FBPase class 2 family. In terms of assembly, homotetramer. It depends on Mn(2+) as a cofactor.

It catalyses the reaction beta-D-fructose 1,6-bisphosphate + H2O = beta-D-fructose 6-phosphate + phosphate. The catalysed reaction is D-sedoheptulose 1,7-bisphosphate + H2O = D-sedoheptulose 7-phosphate + phosphate. Its pathway is carbohydrate biosynthesis; Calvin cycle. Catalyzes the hydrolysis of fructose 1,6-bisphosphate (Fru 1,6-P2) and sedoheptulose 1,7-bisphosphate (Sed 1,7-P2) to fructose 6-phosphate and sedoheptulose 7-phosphate, respectively. In Microcystis aeruginosa (strain NIES-843 / IAM M-2473), this protein is D-fructose 1,6-bisphosphatase class 2/sedoheptulose 1,7-bisphosphatase.